A 531-amino-acid chain; its full sequence is Probable calcium-binding mitochondrial carrier F17E5.2 (531 aa).

EF-hand domains follow at residues 70 to 105 (EKEK…QAHI), 106 to 135 (PASV…NYVI), 136 to 171 (AHEA…MGVN), and 172 to 207 (LDDQ…YPST). 5 residues coordinate Ca(2+): Asp-83, Asp-85, Asp-87, Ser-89, and Asp-94. Residues Asp-149, Asn-151, Asp-153, Glu-155, and Glu-160 each contribute to the Ca(2+) site. 3 Solcar repeats span residues 242–328 (GVWW…IKRW), 338–424 (LSTI…LKSM), and 435–525 (PGVL…VRKQ). Transmembrane regions (helical) follow at residues 248–265 (LVAG…TAPF), 303–322 (GNGI…FMCY), 348–361 (SSAG…IYPM), 399–418 (GYLP…LTVY), 441–458 (LACG…SYPL), and 500–517 (GITP…ISYV).

The protein belongs to the mitochondrial carrier (TC 2.A.29) family.

It localises to the mitochondrion inner membrane. Its function is as follows. Calcium-dependent mitochondrial solute carrier. The protein is Probable calcium-binding mitochondrial carrier F17E5.2 of Caenorhabditis elegans.